The following is a 522-amino-acid chain: BTB/POZ domain-containing protein 3 (522 aa).

Residues Arg25–Lys44 are disordered. Residues Lys32–Lys44 show a composition bias toward low complexity. Residues Ala120–Ala190 form the BTB domain. In terms of domain architecture, BACK spans Phe235–Gln300.

The protein resides in the cytoplasm. Its subcellular location is the cytosol. It is found in the nucleus. In terms of biological role, acts as a key regulator of dendritic field orientation during development of sensory cortex. Also directs dendrites toward active axon terminals when ectopically expressed. The sequence is that of BTB/POZ domain-containing protein 3 (BTBD3) from Homo sapiens (Human).